A 492-amino-acid chain; its full sequence is uncharacterized protein (492 aa).

This sequence belongs to the FGGY kinase family.

This is an uncharacterized protein from Escherichia coli (strain K12).